The primary structure comprises 354 residues: UDP-3-O-acylglucosamine N-acyltransferase (354 aa).

His258 functions as the Proton acceptor in the catalytic mechanism.

This sequence belongs to the transferase hexapeptide repeat family. LpxD subfamily. Homotrimer.

The catalysed reaction is a UDP-3-O-[(3R)-3-hydroxyacyl]-alpha-D-glucosamine + a (3R)-hydroxyacyl-[ACP] = a UDP-2-N,3-O-bis[(3R)-3-hydroxyacyl]-alpha-D-glucosamine + holo-[ACP] + H(+). The protein operates within bacterial outer membrane biogenesis; LPS lipid A biosynthesis. Its function is as follows. Catalyzes the N-acylation of UDP-3-O-acylglucosamine using 3-hydroxyacyl-ACP as the acyl donor. Is involved in the biosynthesis of lipid A, a phosphorylated glycolipid that anchors the lipopolysaccharide to the outer membrane of the cell. This is UDP-3-O-acylglucosamine N-acyltransferase from Sinorhizobium medicae (strain WSM419) (Ensifer medicae).